Consider the following 357-residue polypeptide: MDTTAISPLTPLGVIPDLKNATSVPFNETACENWKEIHHLVFHVANICFAAGLVIPTTLNLHMIFLRGLLTVGCALFIIWATLYRCALDIMIWNSVFLVVNLLHFIYLVYKRRPIKIEKELSSLYKRMFEPLHVPPELFQRLTGQFCNIQTLKTGQAYAAEDKTSVDDRLSILLKGKMKVSYRGHFLHNIYPCAFIDSPEFRSTQMNRGEKFQVTIIADDNCKFLCWSRERLTYFLETEPFLYEIFKYLIGKDITNKLYSLNDPTLNDKASKKIDRQPSLCSQLSVMQMRNSMASTSDSEDGLQMFLRGTSSSSSLRPGRTSPYLRTSAKMKPIEESVEDDVFEAPSAEKLELQRLP.

At 1–38 (MDTTAISPLTPLGVIPDLKNATSVPFNETACENWKEIH) the chain is on the extracellular side. 2 N-linked (GlcNAc...) asparagine glycosylation sites follow: asparagine 20 and asparagine 27. The chain crosses the membrane as a helical span at residues 39 to 59 (HLVFHVANICFAAGLVIPTTL). The Cytoplasmic segment spans residues 60-62 (NLH). The helical transmembrane segment at 63–83 (MIFLRGLLTVGCALFIIWATL) threads the bilayer. Residues 84–89 (YRCALD) lie on the Extracellular side of the membrane. Residues 90–110 (IMIWNSVFLVVNLLHFIYLVY) form a helical membrane-spanning segment. At 111 to 357 (KRRPIKIEKE…AEKLELQRLP (247 aa)) the chain is on the cytoplasmic side. Residues 309 to 323 (GTSSSSSLRPGRTSP) show a composition bias toward low complexity. The interval 309 to 357 (GTSSSSSLRPGRTSPYLRTSAKMKPIEESVEDDVFEAPSAEKLELQRLP) is disordered. Residues 347–357 (SAEKLELQRLP) are compositionally biased toward basic and acidic residues.

It belongs to the popeye family. Homodimer. Homodimerization requires the C-terminus cytoplasmic region. Expressed in the heart and skeletal muscle (at protein level). Isoform 1 and isoform 4: expressed in heart, muscle, brain, stomach, kidney, lung and spleen.

It is found in the lateral cell membrane. Its subcellular location is the cell junction. It localises to the tight junction. The protein resides in the membrane. The protein localises to the cell membrane. It is found in the sarcolemma. Its subcellular location is the caveola. In terms of biological role, cell adhesion molecule involved in the establishment and/or maintenance of cell integrity. Involved in the formation and regulation of the tight junction (TJ) paracellular permeability barrier in epithelial cells. Induces primordial adhesive contact and aggregation of epithelial cells in a Ca(2+)-independent manner. Involved in epithelial movement during corneal sheet formation and regeneration. May play a role in VAMP3-mediated vesicular transport and recycling of receptor molecules. May play a role in the regulation of cell shape and movement by modulating the Rho-GTPase activity. May be involved in skeletal muscle and heart development as well as in the maintenance of heart function. May also be involved in striated muscle regeneration and in the regulation of cell spreading. The polypeptide is Popeye domain-containing protein 1 (POPDC1) (Gallus gallus (Chicken)).